A 209-amino-acid chain; its full sequence is Chloramphenicol acetyltransferase (209 aa).

Residue His-78 is part of the active site.

Belongs to the transferase hexapeptide repeat family.

The catalysed reaction is chloramphenicol + acetyl-CoA = chloramphenicol 3-acetate + CoA. Its function is as follows. This enzyme is an effector of chloramphenicol resistance in bacteria. The sequence is that of Chloramphenicol acetyltransferase (cat) from Agrobacterium fabrum (strain C58 / ATCC 33970) (Agrobacterium tumefaciens (strain C58)).